We begin with the raw amino-acid sequence, 829 residues long: UBA domain-containing protein 8 (829 aa).

The 100-residue stretch at 10 to 109 folds into the EH 1 domain; the sequence is EQQEFDRLLE…KQAKDDHHIK (100 aa). Residues 43–78 form the EF-hand 1 domain; it reads LPQKILAKIWDYCDQEDKGSLDRNQVYACFRLISQA. The disordered stretch occupies residues 93–121; sequence GDPPILPKQAKDDHHIKRSSSETADFTPF. Residues Ser-112 and Ser-113 each carry the phosphoserine modification. 2 consecutive EH domains span residues 129–225 and 300–398; these read ERSE…AKSE and DRSN…SDDT. One can recognise an EF-hand 2 domain in the interval 333 to 368; it reads LDSEELARIWDTVDTQDRGYIDKDEFAVAMEIIKLR. Polar residues-rich tracts occupy residues 466–506 and 574–590; these read SFQD…TQSI and TIPG…QTTE. 3 disordered regions span residues 466–520, 574–614, and 724–785; these read SFQD…VNSS, TIPG…MRKL, and KPQV…QSYE. Residues 602-709 are a coiled coil; that stretch reads EPTEEEQEEM…AKIDSIIADS (108 aa). Positions 728–737 are enriched in pro residues; the sequence is TPAPPTPAPT. Over residues 764–774 the composition is skewed to polar residues; sequence HANSSTPMNYV. Low complexity predominate over residues 775-785; sequence SQPESPPQSYE. The 41-residue stretch at 788 to 828 folds into the UBA domain; it reads QNDNELLQELLSMGFPREKAVIALEATNYDVNEAANILLSS.

The chain is UBA domain-containing protein 8 (ucp8) from Schizosaccharomyces pombe (strain 972 / ATCC 24843) (Fission yeast).